The primary structure comprises 318 residues: MFMLNLLTMIVPVLLAVAFLTLVERKILGYMQLRKGPNVVGPHGLLQPIADAVKLFTKEPLRPLTSSITMFIMAPILALTLALTMWIPLPMPHPLLNMNLGVLFMLAMSSLAVYALLWSGWASNSKYALIGALRAVAQTISYEVTLAIILLSTLLMSGSYSLSTLIITQEYIWLILPSWPLTMMWFISTLAETNRAPFDLTEGESELVSGFNVEYAGGPFALFFLAEYANIIMMNALTTTLFLGAWNNPTTPELYTTNFAMKTLLLTMSFLWIRASYPRFRYDQLMHLLWKNFLPLTLALCMWYVTMPIMMAGIPPQT.

8 helical membrane passes run 2–22, 68–88, 100–120, 147–167, 171–191, 217–237, 254–273, and 294–314; these read FMLNLLTMIVPVLLAVAFLTL, ITMFIMAPILALTLALTMWIP, LGVLFMLAMSSLAVYALLWSG, AIILLSTLLMSGSYSLSTLII, YIWLILPSWPLTMMWFISTLA, GGPFALFFLAEYANIIMMNAL, LYTTNFAMKTLLLTMSFLWI, and LPLTLALCMWYVTMPIMMAGI.

It belongs to the complex I subunit 1 family.

It localises to the mitochondrion inner membrane. It carries out the reaction a ubiquinone + NADH + 5 H(+)(in) = a ubiquinol + NAD(+) + 4 H(+)(out). Functionally, core subunit of the mitochondrial membrane respiratory chain NADH dehydrogenase (Complex I) that is believed to belong to the minimal assembly required for catalysis. Complex I functions in the transfer of electrons from NADH to the respiratory chain. The immediate electron acceptor for the enzyme is believed to be ubiquinone. The polypeptide is NADH-ubiquinone oxidoreductase chain 1 (MT-ND1) (Hsunycteris thomasi (Thomas's nectar bat)).